Consider the following 108-residue polypeptide: uncharacterized protein (108 aa).

Residues 10-32 (LQAPYILCTSFITLKIHNFFFFF) traverse the membrane as a helical segment.

It is found in the membrane. This is an uncharacterized protein from Saccharomyces cerevisiae (strain ATCC 204508 / S288c) (Baker's yeast).